We begin with the raw amino-acid sequence, 202 residues long: MIVKICGLKKAVDVQAAVENGADMIGFVFAKSKRQVTIEQAHELAKNIPTNIKKVGVFVNPTEEELTAAIKGVPLDIVQLHGQEPTSQAERTDAEVIKAFPVKEGKLPDNISDYKNAYILLDAPAEEYEGGSGKTFDWDKINSDVLLKNKLIIAGGLNAENVQEAIHRFEPYGVDISSGVETNGEKDPEKIEIFIKTAKGVE.

It belongs to the TrpF family.

It catalyses the reaction N-(5-phospho-beta-D-ribosyl)anthranilate = 1-(2-carboxyphenylamino)-1-deoxy-D-ribulose 5-phosphate. It functions in the pathway amino-acid biosynthesis; L-tryptophan biosynthesis; L-tryptophan from chorismate: step 3/5. This is N-(5'-phosphoribosyl)anthranilate isomerase from Listeria welshimeri serovar 6b (strain ATCC 35897 / DSM 20650 / CCUG 15529 / CIP 8149 / NCTC 11857 / SLCC 5334 / V8).